The sequence spans 413 residues: Serine/threonine transporter SstT (413 aa).

Transmembrane regions (helical) follow at residues 21 to 41 (IGLL…SALG), 61 to 81 (SVAP…KKVG), 89 to 109 (IIYL…FASF), 146 to 166 (ITAL…GLGI), 189 to 209 (IVHF…ASTL), 224 to 244 (LAVL…IIVF), 305 to 325 (MGGA…TLGI), 337 to 357 (LVAS…LLLI), and 363 to 383 (LFGI…IIGV).

The protein belongs to the dicarboxylate/amino acid:cation symporter (DAACS) (TC 2.A.23) family.

Its subcellular location is the cell inner membrane. The catalysed reaction is L-serine(in) + Na(+)(in) = L-serine(out) + Na(+)(out). The enzyme catalyses L-threonine(in) + Na(+)(in) = L-threonine(out) + Na(+)(out). Involved in the import of serine and threonine into the cell, with the concomitant import of sodium (symport system). This Mannheimia succiniciproducens (strain KCTC 0769BP / MBEL55E) protein is Serine/threonine transporter SstT.